The primary structure comprises 489 residues: Glutamate--tRNA ligase (489 aa).

The 'HIGH' region signature appears at 10 to 20 (PSPTGFLHIGG). A 'KMSKS' region motif is present at residues 261–265 (KLSKR). K264 provides a ligand contact to ATP.

This sequence belongs to the class-I aminoacyl-tRNA synthetase family. Glutamate--tRNA ligase type 1 subfamily. As to quaternary structure, monomer.

Its subcellular location is the cytoplasm. It catalyses the reaction tRNA(Glu) + L-glutamate + ATP = L-glutamyl-tRNA(Glu) + AMP + diphosphate. Its function is as follows. Catalyzes the attachment of glutamate to tRNA(Glu) in a two-step reaction: glutamate is first activated by ATP to form Glu-AMP and then transferred to the acceptor end of tRNA(Glu). This chain is Glutamate--tRNA ligase, found in Finegoldia magna (strain ATCC 29328 / DSM 20472 / WAL 2508) (Peptostreptococcus magnus).